We begin with the raw amino-acid sequence, 509 residues long: MRSSFSKCKVNTCNPSNCLEVDILIVGGGASGIYSAWRLSQTYPNKKVLVIEEKSYLGGRLESVYFGNEKIYAEVGGMRTFPSIDLYVTAVIKKLKLQSIPVPYIEPDNIAYVKNTRLTVEATSIGPSSNPEKQKLIQLYKIPPDEQNISTNDIIYAAAVRAAPTFPEDWRTVYDYPELNNETFSEMFSEQGVSANTQQVFEVFSGYSFFISQRLAASTGIRENISISGENNQHFVVGGYSSIVFGMTDETFCNPNYQLFLNTSIKKITPSNSPNGLHTSILVDTLTGLPITIKSESIILSVPKDSLNRIVAPITPNTIETMNSLTDWRAFKAFLLVDQTTYQLISMNGHMKGRGISDLPARQVWAYSGNPPCVLIYCDNAYADFWKKYINDEINNCFPKFHDPCINKPLVSELKRQIGIIYSVDPSKIVVNKILYKYWYAGAYFSKPSDIPKLFEEVRTPLGPEYSVYLVGSDISVSQGWVDGALNTADNLLVKYYGVTSILDENRLY.

The protein resides in the virion. This is an uncharacterized protein from Acanthamoeba polyphaga mimivirus (APMV).